A 2266-amino-acid chain; its full sequence is Protein ELYS (2266 aa).

Positions Met-1–Gly-494 are seven-bladed beta propeller repeats. Residues Met-1 to Asp-981 form a necessary for cytoplasmic localization region. Residues Ser-509, Ser-528, Ser-1080, Ser-1138, Ser-1142, Ser-1150, Ser-1153, Ser-1155, and Ser-1160 each carry the phosphoserine modification. Positions Val-591–Ser-1092 are important for nuclear localization. The segment at Tyr-1019–Leu-2266 is disordered. Residues Arg-1149–Leu-2266 form a necessary for nuclear localization region. Thr-1175 carries the post-translational modification Phosphothreonine. A phosphoserine mark is found at Ser-1214, Ser-1218, Ser-1222, Ser-1232, and Ser-1250. Thr-1257 is modified (phosphothreonine). Phosphoserine occurs at positions 1283 and 1297. 2 stretches are compositionally biased toward polar residues: residues Lys-1305 to Glu-1320 and Phe-1335 to Glu-1353. At Thr-1369 the chain carries Phosphothreonine. 2 positions are modified to phosphoserine: Ser-1371 and Ser-1513. Residues Arg-1446 to Pro-1698 form a mediates transcriptional activity region. Thr-1517 carries the post-translational modification Phosphothreonine. Phosphoserine occurs at positions 1533, 1541, 1729, and 1806. 2 stretches are compositionally biased toward polar residues: residues Leu-1796 to Thr-1808 and Ile-1822 to Gly-1838. Thr-1808 bears the Phosphothreonine mark. An important for nuclear localization and chromatin binding region spans residues Lys-1842–Leu-2266. Phosphoserine occurs at positions 1878, 1884, and 1898. Over residues Ser-1908–Asn-1919 the composition is skewed to polar residues. Basic and acidic residues-rich tracts occupy residues Lys-1920 to Leu-1930 and Gly-1940 to Ser-1952. A phosphoserine mark is found at Ser-1944 and Ser-1946. The a.T hook DNA-binding region spans Pro-1971–Ser-1983. Residues Val-1986–Ser-2004 show a composition bias toward basic and acidic residues. A phosphoserine mark is found at Ser-1996, Ser-2043, Ser-2044, and Ser-2060. Positions Val-2064–Leu-2084 are enriched in basic and acidic residues. 4 positions are modified to phosphoserine: Ser-2089, Ser-2120, Ser-2123, and Ser-2154. Residues Asn-2169–Ala-2179 are compositionally biased toward basic and acidic residues. The segment covering Pro-2188 to Lys-2197 has biased composition (basic residues). 3 positions are modified to phosphoserine: Ser-2212, Ser-2222, and Ser-2226.

This sequence belongs to the ELYS family. Associates with the Nup107-160 subcomplex of the NPC.

Its subcellular location is the cytoplasm. The protein localises to the nucleus. It is found in the nucleus envelope. The protein resides in the nucleus matrix. It localises to the chromosome. Its subcellular location is the centromere. The protein localises to the kinetochore. It is found in the nucleoplasm. The protein resides in the nuclear pore complex. Its function is as follows. Required for the assembly of a functional nuclear pore complex (NPC) on the surface of chromosomes as nuclei form at the end of mitosis. May initiate NPC assembly by binding to chromatin and recruiting the Nup107-160 subcomplex of the NPC. Also required for the localization of the Nup107-160 subcomplex of the NPC to the kinetochore during mitosis and for the completion of cytokinesis. This Homo sapiens (Human) protein is Protein ELYS (AHCTF1).